Consider the following 385-residue polypeptide: NADH-quinone oxidoreductase subunit D 2 (385 aa).

The protein belongs to the complex I 49 kDa subunit family. As to quaternary structure, NDH-1 is composed of 14 different subunits. Subunits NuoB, C, D, E, F, and G constitute the peripheral sector of the complex.

The protein localises to the cell membrane. It carries out the reaction a quinone + NADH + 5 H(+)(in) = a quinol + NAD(+) + 4 H(+)(out). In terms of biological role, NDH-1 shuttles electrons from NADH, via FMN and iron-sulfur (Fe-S) centers, to quinones in the respiratory chain. The immediate electron acceptor for the enzyme in this species is believed to be a menaquinone. Couples the redox reaction to proton translocation (for every two electrons transferred, four hydrogen ions are translocated across the cytoplasmic membrane), and thus conserves the redox energy in a proton gradient. This Salinispora arenicola (strain CNS-205) protein is NADH-quinone oxidoreductase subunit D 2.